Reading from the N-terminus, the 42-residue chain is Photosystem II reaction center protein J (42 aa).

A helical membrane pass occupies residues 10-30; sequence IPLWLVGTVVGTLALGLVALF.

This sequence belongs to the PsbJ family. PSII is composed of 1 copy each of membrane proteins PsbA, PsbB, PsbC, PsbD, PsbE, PsbF, PsbH, PsbI, PsbJ, PsbK, PsbL, PsbM, PsbT, PsbX, PsbY, PsbZ, Psb30/Ycf12, at least 3 peripheral proteins of the oxygen-evolving complex and a large number of cofactors. It forms dimeric complexes.

The protein resides in the plastid. It localises to the chloroplast thylakoid membrane. One of the components of the core complex of photosystem II (PSII). PSII is a light-driven water:plastoquinone oxidoreductase that uses light energy to abstract electrons from H(2)O, generating O(2) and a proton gradient subsequently used for ATP formation. It consists of a core antenna complex that captures photons, and an electron transfer chain that converts photonic excitation into a charge separation. In Oltmannsiellopsis viridis (Marine flagellate), this protein is Photosystem II reaction center protein J.